Consider the following 417-residue polypeptide: Calreticulin (417 aa).

Residues 1–17 (MLLSVPLLLGLLGLAAA) form the signal peptide. Positions 18-197 (EPAVYFKEQF…NSQVESGSLE (180 aa)) are N-domain. Gln26 contacts Ca(2+). Lys48 carries the post-translational modification N6-acetyllysine. Ca(2+) contacts are provided by Lys62 and Lys64. Cys105 and Cys137 are joined by a disulfide. 4 residues coordinate an alpha-D-glucoside: Tyr109, Lys111, Tyr128, and Asp135. N6-acetyllysine is present on Lys159. One copy of the 1-1 repeat lies at 191-202 (VESGSLEDDWDF). Residues 191 to 255 (VESGSLEDDW…DAKKPEDWDE (65 aa)) are 4 X approximate repeats. The tract at residues 193–278 (SGSLEDDWDF…PEYKGEWKPR (86 aa)) is disordered. Residues 198-308 (DDWDFLPPKK…YSPDPSIYAY (111 aa)) are P-domain. Basic and acidic residues predominate over residues 207-251 (KIKDPDASKPEDWDERAKIDDPTDSKPEDWDKPEHIPDPDAKKPE). Lys209 bears the N6-acetyllysine mark. Tandem repeats lie at residues 210–221 (DPDASKPEDWDE), 227–238 (DPTDSKPEDWDK), 244–255 (DPDAKKPEDWDE), 259–269 (GEWEPPVIQNP), 273–283 (GEWKPRQIDNP), and 287–297 (GTWIHPEIDNP). The segment at 237-270 (DKPEHIPDPDAKKPEDWDEEMDGEWEPPVIQNPE) is interaction with PPIB. Residues 252-261 (DWDEEMDGEW) show a composition bias toward acidic residues. Residues 259-297 (GEWEPPVIQNPEYKGEWKPRQIDNPDYKGTWIHPEIDNP) form a 3 X approximate repeats region. The interval 309–417 (DNFGVLGLDL…DVPGQAKDEL (109 aa)) is C-domain. Asp317 is an an alpha-D-glucoside binding site. Asp328 is a Ca(2+) binding site. The disordered stretch occupies residues 350 to 417 (TKAAEKQMKD…DVPGQAKDEL (68 aa)). Residues 352–379 (AAEKQMKDKQDEEQRLKEEEEDKKRKEE) show a composition bias toward basic and acidic residues. Acidic residues predominate over residues 380-409 (EEAEDKEDDEDKDEDEEDEEDKEEDEEEDV). The Prevents secretion from ER motif lies at 414–417 (KDEL).

Belongs to the calreticulin family. In terms of assembly, monomer. Component of an EIF2 complex at least composed of CELF1/CUGBP1, CALR, CALR3, EIF2S1, EIF2S2, HSP90B1 and HSPA5. Interacts with PDIA3/ERp57 and SPACA9. Interacts with TRIM21. Interacts with NR3C1. Interacts with PPIB. Interacts (via P-domain) with PDIA5. Interacts with GABARAP. Interacts with CLCC1.

The protein resides in the endoplasmic reticulum lumen. It localises to the cytoplasm. Its subcellular location is the cytosol. The protein localises to the secreted. It is found in the extracellular space. The protein resides in the extracellular matrix. It localises to the cell surface. Its subcellular location is the sarcoplasmic reticulum lumen. The protein localises to the cytoplasmic vesicle. It is found in the secretory vesicle. The protein resides in the cortical granule. It localises to the cytoplasmic granule. Calcium-binding chaperone that promotes folding, oligomeric assembly and quality control in the endoplasmic reticulum (ER) via the calreticulin/calnexin cycle. This lectin interacts transiently with almost all of the monoglucosylated glycoproteins that are synthesized in the ER. Interacts with the DNA-binding domain of NR3C1 and mediates its nuclear export. Involved in maternal gene expression regulation. May participate in oocyte maturation via the regulation of calcium homeostasis. The sequence is that of Calreticulin (CALR) from Chlorocebus aethiops (Green monkey).